The sequence spans 269 residues: Chymotrypsin-like elastase family member 2A (269 aa).

A signal peptide spans 1–16 (MIRALLLSTLVAGALS). A propeptide spans 17 to 28 (CGLPANLPQLPR) (activation peptide). A Peptidase S1 domain is found at 29-267 (VVGGEDARPN…YIDWINSVIA (239 aa)). Residues cysteine 58 and cysteine 74 are joined by a disulfide bond. Residues histidine 73 and aspartate 121 each act as charge relay system in the active site. Disulfide bonds link cysteine 155-cysteine 222, cysteine 186-cysteine 202, and cysteine 212-cysteine 243. Catalysis depends on serine 216, which acts as the Charge relay system.

The protein belongs to the peptidase S1 family. Elastase subfamily. Interacts with CPA1. Interacts with SERPINA1. In terms of tissue distribution, pancreas.

Its subcellular location is the secreted. The catalysed reaction is Preferential cleavage: Leu-|-Xaa, Met-|-Xaa and Phe-|-Xaa. Hydrolyzes elastin.. Functionally, elastase that enhances insulin signaling and might have a physiologic role in cellular glucose metabolism. Circulates in plasma and reduces platelet hyperactivation, triggers both insulin secretion and degradation, and increases insulin sensitivity. This chain is Chymotrypsin-like elastase family member 2A (CELA2A), found in Sus scrofa (Pig).